The following is a 362-amino-acid chain: uncharacterized protein (362 aa).

A helical membrane pass occupies residues 13–33; sequence VLILSVGLNMLFLLLFYSAIF. The 44-residue stretch at 314-357 folds into the LysM domain; it reads EEYVVQDGDSLWLIAKRFGIPMDKIIQKNGLNHHRLFPGKVLKL.

This sequence belongs to the chlamydial CPn_0593/CT_474/TC_0759 family.

It is found in the membrane. This is an uncharacterized protein from Chlamydia pneumoniae (Chlamydophila pneumoniae).